The sequence spans 102 residues: Small ribosomal subunit protein uS10 (102 aa).

It belongs to the universal ribosomal protein uS10 family. In terms of assembly, part of the 30S ribosomal subunit.

In terms of biological role, involved in the binding of tRNA to the ribosomes. The sequence is that of Small ribosomal subunit protein uS10 from Phenylobacterium zucineum (strain HLK1).